We begin with the raw amino-acid sequence, 604 residues long: Aspartate--tRNA(Asp/Asn) ligase (604 aa).

Residue Glu175 coordinates L-aspartate. The tract at residues 199–202 (QQFK) is aspartate. L-aspartate is bound by residues Arg221 and His456. 221 to 223 (RDE) is a binding site for ATP. Glu496 serves as a coordination point for ATP. An L-aspartate-binding site is contributed by Arg503. Residue 548–551 (GVDR) coordinates ATP.

Belongs to the class-II aminoacyl-tRNA synthetase family. Type 1 subfamily. As to quaternary structure, homodimer.

It is found in the cytoplasm. The enzyme catalyses tRNA(Asx) + L-aspartate + ATP = L-aspartyl-tRNA(Asx) + AMP + diphosphate. In terms of biological role, aspartyl-tRNA synthetase with relaxed tRNA specificity since it is able to aspartylate not only its cognate tRNA(Asp) but also tRNA(Asn). Reaction proceeds in two steps: L-aspartate is first activated by ATP to form Asp-AMP and then transferred to the acceptor end of tRNA(Asp/Asn). The chain is Aspartate--tRNA(Asp/Asn) ligase from Methylobacterium sp. (strain 4-46).